A 396-amino-acid polypeptide reads, in one-letter code: MSEFIAENRGADAITRPNWSAVFSVAFCVACLIIVEFLPVSLLTPMAQDLGISEGVAGQSVTVTAFVAMFASLFITQTIQATDRRYVVILFAVLLTLSCLLVSFANSFSLLLIGRACLGLALGGFWAISASLTMRLVPPRTVPKALSVIFGAVSIALVIAAPLGGFLGELIGWRNVFNAAAAMGVLCIFWIIKSLPSLPGEPSHQKQNTFRLLQRPGVMAGMIAIFMSFAGQFAFFTYIRPVYMNLAGFGVDGLTLVLLSFGIASFVGTSLSSFILKRSVKLALAGAPFVLALSALVLTLWGSDKIVATGVAIIWGLTFALIPVGWSTWITRSLADQAEKAGSIQVAVIQLANTCGAAIGGYALDNIGLTSPLMLSGTLMLLTALLVTAKVKMKKS.

Residues 1 to 21 are Cytoplasmic-facing; the sequence is MSEFIAENRGADAITRPNWSA. Residues 22-42 form a helical membrane-spanning segment; sequence VFSVAFCVACLIIVEFLPVSL. Residues 43-54 lie on the Periplasmic side of the membrane; sequence LTPMAQDLGISE. Residues 55–75 form a helical membrane-spanning segment; it reads GVAGQSVTVTAFVAMFASLFI. Residues 76-85 lie on the Cytoplasmic side of the membrane; that stretch reads TQTIQATDRR. Residues 86–106 form a helical membrane-spanning segment; the sequence is YVVILFAVLLTLSCLLVSFAN. Residue Ser107 is a topological domain, periplasmic. Residues 108 to 128 traverse the membrane as a helical segment; sequence FSLLLIGRACLGLALGGFWAI. The Cytoplasmic portion of the chain corresponds to 129 to 147; it reads SASLTMRLVPPRTVPKALS. The helical transmembrane segment at 148-168 threads the bilayer; it reads VIFGAVSIALVIAAPLGGFLG. The Periplasmic segment spans residues 169 to 175; it reads ELIGWRN. The helical transmembrane segment at 176 to 196 threads the bilayer; that stretch reads VFNAAAAMGVLCIFWIIKSLP. Residues 197-215 lie on the Cytoplasmic side of the membrane; the sequence is SLPGEPSHQKQNTFRLLQR. Residues 216 to 236 form a helical membrane-spanning segment; the sequence is PGVMAGMIAIFMSFAGQFAFF. At 237-255 the chain is on the periplasmic side; it reads TYIRPVYMNLAGFGVDGLT. The helical transmembrane segment at 256–276 threads the bilayer; the sequence is LVLLSFGIASFVGTSLSSFIL. The Cytoplasmic segment spans residues 277–281; that stretch reads KRSVK. A helical transmembrane segment spans residues 282 to 302; the sequence is LALAGAPFVLALSALVLTLWG. Topologically, residues 303 to 305 are periplasmic; the sequence is SDK. Residues 306-326 form a helical membrane-spanning segment; sequence IVATGVAIIWGLTFALIPVGW. At 327–343 the chain is on the cytoplasmic side; sequence STWITRSLADQAEKAGS. Residues 344 to 364 form a helical membrane-spanning segment; sequence IQVAVIQLANTCGAAIGGYAL. Topologically, residues 365 to 366 are periplasmic; that stretch reads DN. A helical transmembrane segment spans residues 367–387; that stretch reads IGLTSPLMLSGTLMLLTALLV. Topologically, residues 388–396 are cytoplasmic; it reads TAKVKMKKS.

Belongs to the major facilitator superfamily. DHA1 family. NepI (TC 2.A.1.2.26) subfamily.

It is found in the cell inner membrane. It catalyses the reaction inosine(in) + H(+)(out) = inosine(out) + H(+)(in). The catalysed reaction is guanosine(in) + H(+)(out) = guanosine(out) + H(+)(in). Functionally, involved in the efflux of purine ribonucleosides, such as inosine and guanosine. This chain is Purine ribonucleoside efflux pump NepI, found in Escherichia coli O127:H6 (strain E2348/69 / EPEC).